We begin with the raw amino-acid sequence, 364 residues long: SVP1-like protein 2 (364 aa).

WD repeat units follow at residues 173–213 (AHDS…KICE) and 218–257 (YQHTAVCQLAFSPDELLLACASKKETLHIFSLHGSPNTIR).

The protein belongs to the WD repeat PROPPIN family.

The protein localises to the vacuole membrane. Its subcellular location is the cytoplasmic vesicle membrane. It is found in the preautophagosomal structure membrane. In terms of biological role, involved in mitochondrial or peroxisomal functions and amino acid signaling pathways. The protein is SVP1-like protein 2 (hsv2) of Schizosaccharomyces pombe (strain 972 / ATCC 24843) (Fission yeast).